We begin with the raw amino-acid sequence, 342 residues long: Maltose regulon regulatory protein MalI (342 aa).

One can recognise an HTH lacI-type domain in the interval Ile7 to Gly61. Positions Ile9 to Ser28 form a DNA-binding region, H-T-H motif.

Its function is as follows. Repressor for the malX and malY genes. Also regulates its own expression. Binds maltose as an inducer. The sequence is that of Maltose regulon regulatory protein MalI (malI) from Escherichia coli (strain K12).